Consider the following 187-residue polypeptide: MYTQNTMKKNWYVTVGAAAALAATVGMGTAMAGTLDTTWKEATLPQVKAMLEKDTGKVSGDTVTYSGKTVHVVAAAVLPGFPFPSFEVHDKKNPTLEIPAGATVDVTFINTNKGFGHSFDITKKGPPYAVMPVIDPIVAGTGFSPVPKDGKFGYTDFTWHPTAGTYYYVCQIPGHAATGMFGKIVVK.

An N-terminal signal peptide occupies residues 1-32; the sequence is MYTQNTMKKNWYVTVGAAAALAATVGMGTAMA. One can recognise a Plastocyanin-like domain in the interval 85 to 187; sequence SFEVHDKKNP…TGMFGKIVVK (103 aa). Cu cation contacts are provided by His-117, Cys-170, His-175, and Met-180.

Monomer. The cofactor is Cu cation.

It is found in the periplasm. Its function is as follows. Electron carrier from cytochrome c552 to the A-type oxidase. The protein is Rusticyanin (rus) of Acidithiobacillus ferrooxidans (strain ATCC 23270 / DSM 14882 / CIP 104768 / NCIMB 8455) (Ferrobacillus ferrooxidans (strain ATCC 23270)).